A 1175-amino-acid chain; its full sequence is Solute carrier family 9 member C1 (1175 aa).

Over 1-39 (MEMEEISENLTASHSIKLTNMWLELLKSVFLSTPQDLPE) the chain is Extracellular. The chain crosses the membrane as a helical span at residues 40–59 (IILILSLICTVGAFLNMHLK). Residues 60–64 (DFPIP) are Cytoplasmic-facing. Residues 65-82 (LPVILFLIGCCFEILSFA) form a helical membrane-spanning segment. At 83–98 (STQIQIYADAIQWMDP) the chain is on the extracellular side. The helical transmembrane segment at 99-115 (DIFFGIFTPVIIFNVAF) threads the bilayer. The Cytoplasmic portion of the chain corresponds to 116–125 (DMDIYMLQKL). A helical transmembrane segment spans residues 126–151 (FWQILVITIPGFLINYTLILWYLQSV). Residues 126-213 (FWQILVITIP…SLVIYSGVVH (88 aa)) form a transport core domain region. Topologically, residues 152–157 (NKLSLK) are extracellular. Residues 158-183 (TVPWLLFSAVLISSDPMLTSASIRDL) form a helical membrane-spanning segment. The Cytoplasmic segment spans residues 184–186 (GLS). Residues 187–212 (RSLTNLINGESLLTSVLSLVIYSGVV) traverse the membrane as a helical segment. Topologically, residues 213–225 (HIRFKSKSVNHTL) are extracellular. The helical transmembrane segment at 226 to 257 (AHKVMSTAWSYIVESFITGIVFTKVIQLWMAT) threads the bilayer. Over 258 to 261 (IFGD) the chain is Cytoplasmic. The helical transmembrane segment at 262–283 (DVNHITLIFSVLYLIFYVCELV) threads the bilayer. The Extracellular portion of the chain corresponds to 284–286 (GMS). Residues 287–300 (GIFTLATIGLFLNS) traverse the membrane as a helical segment. The Cytoplasmic segment spans residues 301-307 (TSFKPGV). The helical transmembrane segment at 308–339 (EAFLLEFWNCLSFIGFLMVFTFIGLLIPAHTY) threads the bilayer. Residues 340 to 344 (LHISF) lie on the Extracellular side of the membrane. A helical transmembrane segment spans residues 345–374 (SDVYYSLNIYFTLIVLRLLVFLLMSPILSR). A transport core domain region spans residues 345–446 (SDVYYSLNIY…FILPMAVTKL (102 aa)). At 375–380 (LGHGFS) the chain is on the cytoplasmic side. A helical transmembrane segment spans residues 381-411 (WRWAFIMVWSEMKGTPNINMALLLAYSDISL). The Extracellular portion of the chain corresponds to 412–415 (GSER). Residues 416-446 (ERSQILFHGVSVCVITLIVNRFILPMAVTKL) form a helical membrane-spanning segment. At 447 to 632 (GLRDVTSTKY…ACHRIVFTNE (186 aa)) the chain is on the cytoplasmic side. The ion transport-like stretch occupies residues 618–698 (YMFLHACHRI…EFFSHTWLLF (81 aa)). The chain crosses the membrane as a helical span at residues 633 to 653 (FEYTGYLVVLMSTYPMIICWI). Residues 654–657 (SRLK) lie on the Extracellular side of the membrane. The chain crosses the membrane as a helical span at residues 658–684 (DIYDNEIKCANYYFLAFYILEALLKVA). Residues 685 to 691 (AMRKEFF) lie on the Cytoplasmic side of the membrane. A helical membrane pass occupies residues 692 to 716 (SHTWLLFELGITLVGVLDIILIETD). Over 717–724 (SISYNFDL) the chain is Extracellular. A helical membrane pass occupies residues 725-751 (TETVVFMNVIRLLRILRILKLVTPKLL). Topologically, residues 752 to 1175 (QIIDKRMSQQ…EELIEENINI (424 aa)) are cytoplasmic. Residues 1137-1146 (MKPDSERESF) show a composition bias toward basic and acidic residues. Residues 1137–1175 (MKPDSERESFETLDETSEEDNGKKENQENEELIEENINI) are disordered. Positions 1164-1175 (ENEELIEENINI) are enriched in acidic residues.

The protein belongs to the monovalent cation:proton antiporter 1 (CPA1) transporter (TC 2.A.36) family. As to quaternary structure, interacts with soluble adenylyl cyclase (sAC). Testis-specific. Specifically present in the principal piece of sperm tail (at protein level).

Its subcellular location is the cell projection. The protein resides in the cilium. It localises to the flagellum membrane. In terms of biological role, sperm-specific solute carrier involved in intracellular pH regulation of spermatozoa. Required for sperm motility and fertility. Involved in sperm cell hyperactivation, a step needed for sperm motility which is essential late in the preparation of sperm for fertilization. Required for the expression and bicarbonate regulation of the soluble adenylyl cyclase (sAC). The protein is Solute carrier family 9 member C1 (Slc9c1) of Mus musculus (Mouse).